Here is a 742-residue protein sequence, read N- to C-terminus: uncharacterized protein (742 aa).

Residues 1-102 (MMLLKRSNDN…FTQTKPNNTD (102 aa)) form a disordered region. Over residues 18-28 (NRQNRQNNRQN) the composition is skewed to low complexity. Residues 48 to 57 (RDSSRMDPVD) show a composition bias toward basic and acidic residues. Polar residues-rich tracts occupy residues 60 to 69 (TLISFTSGKP) and 77 to 99 (HDTG…TKPN).

This is an uncharacterized protein from Acanthamoeba polyphaga mimivirus (APMV).